The sequence spans 59 residues: Large ribosomal subunit protein bL35 (59 aa).

Basic residues predominate over residues 17-43 (GQIKRKHAYTSHLAPHKSTKQKRHLRK). Residues 17–47 (GQIKRKHAYTSHLAPHKSTKQKRHLRKQATV) are disordered.

The protein belongs to the bacterial ribosomal protein bL35 family.

The protein is Large ribosomal subunit protein bL35 of Mycoplasma genitalium (strain ATCC 33530 / DSM 19775 / NCTC 10195 / G37) (Mycoplasmoides genitalium).